We begin with the raw amino-acid sequence, 283 residues long: Pantothenate synthetase (283 aa).

31 to 38 (MGALHDGH) serves as a coordination point for ATP. The active-site Proton donor is the His-38. Gln-62 lines the (R)-pantoate pocket. Residue Gln-62 coordinates beta-alanine. An ATP-binding site is contributed by 148–151 (GKKD). (R)-pantoate is bound at residue Gln-154. Residues Val-177 and 185-188 (KSSR) contribute to the ATP site.

The protein belongs to the pantothenate synthetase family. Homodimer.

It localises to the cytoplasm. It catalyses the reaction (R)-pantoate + beta-alanine + ATP = (R)-pantothenate + AMP + diphosphate + H(+). It participates in cofactor biosynthesis; (R)-pantothenate biosynthesis; (R)-pantothenate from (R)-pantoate and beta-alanine: step 1/1. In terms of biological role, catalyzes the condensation of pantoate with beta-alanine in an ATP-dependent reaction via a pantoyl-adenylate intermediate. The polypeptide is Pantothenate synthetase (Staphylococcus aureus (strain MSSA476)).